The sequence spans 441 residues: UDP-N-acetylglucosamine 1-carboxyvinyltransferase 1 (441 aa).

Position 42–43 (42–43 (KN)) interacts with phosphoenolpyruvate. Arginine 117 is a UDP-N-acetyl-alpha-D-glucosamine binding site. Residue cysteine 141 is the Proton donor of the active site. At cysteine 141 the chain carries 2-(S-cysteinyl)pyruvic acid O-phosphothioketal. The UDP-N-acetyl-alpha-D-glucosamine site is built by aspartate 330 and isoleucine 352.

The protein belongs to the EPSP synthase family. MurA subfamily.

The protein resides in the cytoplasm. The catalysed reaction is phosphoenolpyruvate + UDP-N-acetyl-alpha-D-glucosamine = UDP-N-acetyl-3-O-(1-carboxyvinyl)-alpha-D-glucosamine + phosphate. It functions in the pathway cell wall biogenesis; peptidoglycan biosynthesis. In terms of biological role, cell wall formation. Adds enolpyruvyl to UDP-N-acetylglucosamine. In Symbiobacterium thermophilum (strain DSM 24528 / JCM 14929 / IAM 14863 / T), this protein is UDP-N-acetylglucosamine 1-carboxyvinyltransferase 1.